A 159-amino-acid chain; its full sequence is Ribosomal RNA large subunit methyltransferase H (159 aa).

The S-adenosyl-L-methionine site is built by leucine 76 and glycine 108.

The protein belongs to the RNA methyltransferase RlmH family. Homodimer.

It is found in the cytoplasm. It carries out the reaction pseudouridine(1915) in 23S rRNA + S-adenosyl-L-methionine = N(3)-methylpseudouridine(1915) in 23S rRNA + S-adenosyl-L-homocysteine + H(+). In terms of biological role, specifically methylates the pseudouridine at position 1915 (m3Psi1915) in 23S rRNA. This chain is Ribosomal RNA large subunit methyltransferase H, found in Natranaerobius thermophilus (strain ATCC BAA-1301 / DSM 18059 / JW/NM-WN-LF).